The following is a 719-amino-acid chain: 1,4-alpha-glucan branching enzyme GlgB (719 aa).

The active-site Nucleophile is the D400. Residue E453 is the Proton donor of the active site.

This sequence belongs to the glycosyl hydrolase 13 family. GlgB subfamily. As to quaternary structure, monomer.

It carries out the reaction Transfers a segment of a (1-&gt;4)-alpha-D-glucan chain to a primary hydroxy group in a similar glucan chain.. It functions in the pathway glycan biosynthesis; glycogen biosynthesis. Its function is as follows. Catalyzes the formation of the alpha-1,6-glucosidic linkages in glycogen by scission of a 1,4-alpha-linked oligosaccharide from growing alpha-1,4-glucan chains and the subsequent attachment of the oligosaccharide to the alpha-1,6 position. In Chlamydia caviae (strain ATCC VR-813 / DSM 19441 / 03DC25 / GPIC) (Chlamydophila caviae), this protein is 1,4-alpha-glucan branching enzyme GlgB.